The following is a 275-amino-acid chain: Polyamine aminopropyltransferase (275 aa).

Residues 2-235 (DLWLREGQIE…GFWSFTIGSK (234 aa)) enclose the PABS domain. Position 31 (Gln-31) interacts with S-methyl-5'-thioadenosine. Spermidine is bound by residues His-62 and Asp-86. Residues Glu-106 and 137-138 (DG) contribute to the S-methyl-5'-thioadenosine site. Residue Asp-155 is the Proton acceptor of the active site. A spermidine-binding site is contributed by 155–158 (DSTD).

It belongs to the spermidine/spermine synthase family. In terms of assembly, homodimer or homotetramer.

It localises to the cytoplasm. The enzyme catalyses S-adenosyl 3-(methylsulfanyl)propylamine + putrescine = S-methyl-5'-thioadenosine + spermidine + H(+). It participates in amine and polyamine biosynthesis; spermidine biosynthesis; spermidine from putrescine: step 1/1. Its function is as follows. Catalyzes the irreversible transfer of a propylamine group from the amino donor S-adenosylmethioninamine (decarboxy-AdoMet) to putrescine (1,4-diaminobutane) to yield spermidine. This chain is Polyamine aminopropyltransferase, found in Clostridium kluyveri (strain NBRC 12016).